The following is an 83-amino-acid chain: Large ribosomal subunit protein bL27 (83 aa).

The protein belongs to the bacterial ribosomal protein bL27 family.

This is Large ribosomal subunit protein bL27 from Bifidobacterium adolescentis (strain ATCC 15703 / DSM 20083 / NCTC 11814 / E194a).